A 64-amino-acid polypeptide reads, in one-letter code: Large ribosomal subunit protein bL35 (64 aa).

The tract at residues Ser19–Thr41 is disordered. Positions Glu25–His35 are enriched in basic and acidic residues.

It belongs to the bacterial ribosomal protein bL35 family.

This chain is Large ribosomal subunit protein bL35, found in Chlorobaculum tepidum (strain ATCC 49652 / DSM 12025 / NBRC 103806 / TLS) (Chlorobium tepidum).